We begin with the raw amino-acid sequence, 420 residues long: Alpha-ketoglutarate-dependent xanthine dioxygenase xan-1 (420 aa).

Positions 157 and 159 each coordinate Fe cation. Residues Thr206 and Trp336 each coordinate 2-oxoglutarate. His351 lines the Fe cation pocket. Residue Arg366 participates in 2-oxoglutarate binding. A substrate-binding site is contributed by Arg366.

This sequence belongs to the TfdA dioxygenase family. Fe(2+) serves as cofactor.

Its subcellular location is the cytoplasm. It is found in the cytosol. It catalyses the reaction xanthine + 2-oxoglutarate + O2 = urate + succinate + CO2. In terms of biological role, alpha-ketoglutarate-dependent xanthine dioxygenase is a non-heme mononuclear Fe(2+) enzyme that decarboxylates alpha-ketoglutarate to succinate and CO(2) while hydroxylating xanthine to generate uric acid. Allows xanthine utilization as a nitrogen source. In Neurospora crassa (strain ATCC 24698 / 74-OR23-1A / CBS 708.71 / DSM 1257 / FGSC 987), this protein is Alpha-ketoglutarate-dependent xanthine dioxygenase xan-1.